A 751-amino-acid polypeptide reads, in one-letter code: Dual specificity tyrosine-phosphorylation-regulated kinase 1A (751 aa).

Residues 59-68 (YNDQIQQPLP) are compositionally biased toward polar residues. Disordered regions lie at residues 59–81 (YNDQ…RDPA) and 104–129 (YAKK…KVYN). Positions 109–126 (RRHQQGQGDDSSHKKERK) match the Bipartite nuclear localization signal motif. The region spanning 151 to 471 (YEIDSLIGKG…PYYALQHSFF (321 aa)) is the Protein kinase domain. Residues 157–165 (IGKGSFGQV), K180, and 230–233 (FEML) contribute to the ATP site. The active-site Proton acceptor is the D279. Over residues 477-493 (EGTNTSNSVSTSPAMEQ) the composition is skewed to polar residues. 3 disordered regions span residues 477–532 (EGTN…HSGG), 580–667 (HVPS…GNQA), and 730–751 (GMDR…VASS). Over residues 494–517 (SQSSGTTSSTSSSSGGSSGTSNSG) the composition is skewed to low complexity. Residues 585 to 613 (QQNVPHHHGNGSHHHHHHHHHHHGQHVLS) form a histidine-rich domain (HRD) region. Residues 589-609 (PHHHGNGSHHHHHHHHHHHGQ) are compositionally biased toward basic residues. Residues 611-622 (VLSNRTRTRIYN) show a composition bias toward polar residues. Low complexity-rich tracts occupy residues 623-633 (SPSTSSSTQDS) and 642-660 (SMTS…SSST). A compositionally biased stretch (polar residues) spans 742–751 (CVQQSPVASS).

This sequence belongs to the protein kinase superfamily. CMGC Ser/Thr protein kinase family. MNB/DYRK subfamily. Autophosphorylated on tyrosine residues.

The protein resides in the nucleus. It localises to the nucleus speckle. The catalysed reaction is L-seryl-[protein] + ATP = O-phospho-L-seryl-[protein] + ADP + H(+). The enzyme catalyses L-threonyl-[protein] + ATP = O-phospho-L-threonyl-[protein] + ADP + H(+). It catalyses the reaction L-tyrosyl-[protein] + ATP = O-phospho-L-tyrosyl-[protein] + ADP + H(+). It carries out the reaction [DNA-directed RNA polymerase] + ATP = phospho-[DNA-directed RNA polymerase] + ADP + H(+). Functionally, dual-specificity kinase which possesses both serine/threonine and tyrosine kinase activities. Exhibits a substrate preference for proline at position P+1 and arginine at position P-3. Plays an important role in double-strand breaks (DSBs) repair following DNA damage. Mechanistically, phosphorylates RNF169 and increases its ability to block accumulation of TP53BP1 at the DSB sites thereby promoting homologous recombination repair (HRR). Also acts as a positive regulator of transcription by acting as a CTD kinase that mediates phosphorylation of the CTD (C-terminal domain) of the large subunit of RNA polymerase II (RNAP II) POLR2A. Modulates alternative splicing by phosphorylating the splice factor SRSF6. Phosphorylates SEPTIN4, SEPTIN5 and SF3B1. The sequence is that of Dual specificity tyrosine-phosphorylation-regulated kinase 1A from Xenopus tropicalis (Western clawed frog).